Reading from the N-terminus, the 328-residue chain is Opticin (328 aa).

A signal peptide spans 1–19; sequence MKFLAFLSLLSLVLQKAET. N46 is a glycosylation site (N-linked (GlcNAc...) asparagine). Y69 is modified (sulfotyrosine). N-linked (GlcNAc...) asparagine glycans are attached at residues N80 and N101. Residues 112 to 149 enclose the LRRNT domain; it reads LLNSQSSHGLPTCLVCVCLGSSVYCDDADLENIPPLPQ. 6 LRR repeats span residues 150–171, 174–195, 198–219, 244–265, 266–286, and 296–316; these read MTTY…DFKG, KLRR…ALRL, ALQD…PSGI, KLQF…LPLS, LRSL…TFCD, and QLED…PEAY. C285 and C318 form a disulfide bridge. N308 is a glycosylation site (N-linked (GlcNAc...) asparagine).

It belongs to the small leucine-rich proteoglycan (SLRP) family. SLRP class III subfamily. In terms of assembly, homodimer. In terms of processing, O-glycosylated. Post-translationally, sulfated on tyrosine residues. Proteolytically cleaved by MMP1, MMP2, MMP3, MMP7, MMP8, MMP9, ADAMTS4, and ADAMTS5. Proteolytically cleaved by MMP13. Expressed in cartilage (at protein level). Expressed in the vitreous collagen, inner limiting membrane, lens capsule, trabecular meshwork, anterior surface of the iris, the area adjacent to the nonpigmented ciliary epithelium, and weakly expressed in the retina of the eye (at protein level). Expressed in the nonpigmented ciliary epithelium of the eye.

The protein localises to the secreted. It is found in the extracellular space. It localises to the extracellular matrix. Its function is as follows. Inhibits angiogenesis in the vitreous humor of the eye, and therefore represses neovascularization. Binds collagen fibrils. May be involved in collagen fiber organization via regulation of other members of the small leucine-rich repeat proteoglycan superfamily. This chain is Opticin (Optc), found in Mus musculus (Mouse).